Reading from the N-terminus, the 96-residue chain is Small ribosomal subunit protein bS6 (96 aa).

This sequence belongs to the bacterial ribosomal protein bS6 family.

Its function is as follows. Binds together with bS18 to 16S ribosomal RNA. The polypeptide is Small ribosomal subunit protein bS6 (Corynebacterium aurimucosum (strain ATCC 700975 / DSM 44827 / CIP 107346 / CN-1) (Corynebacterium nigricans)).